A 425-amino-acid chain; its full sequence is Formyl-CoA:oxalate CoA-transferase (425 aa).

CoA is bound by residues 17–18 (QS), Arg38, 72–75 (LDTK), 96–98 (NFG), Arg104, and 136–139 (KVYE). Asp168 acts as the Nucleophile in catalysis. 247 to 249 (GGQ) serves as a coordination point for substrate.

Belongs to the CoA-transferase III family. Frc subfamily. As to quaternary structure, homodimer.

It carries out the reaction formyl-CoA + oxalate = oxalyl-CoA + formate. It participates in metabolic intermediate degradation; oxalate degradation; CO(2) and formate from oxalate: step 1/2. Involved in the catabolism of oxalate and in the adapatation to low pH via the induction of the oxalate-dependent acid tolerance response (ATR). Catalyzes the transfer of the CoA moiety from formyl-CoA to oxalate. The sequence is that of Formyl-CoA:oxalate CoA-transferase from Rhodopseudomonas palustris (strain HaA2).